Reading from the N-terminus, the 193-residue chain is dTTP/UTP pyrophosphatase (193 aa).

The active-site Proton acceptor is D75.

It belongs to the Maf family. YhdE subfamily. A divalent metal cation is required as a cofactor.

The protein localises to the cytoplasm. It carries out the reaction dTTP + H2O = dTMP + diphosphate + H(+). It catalyses the reaction UTP + H2O = UMP + diphosphate + H(+). In terms of biological role, nucleoside triphosphate pyrophosphatase that hydrolyzes dTTP and UTP. May have a dual role in cell division arrest and in preventing the incorporation of modified nucleotides into cellular nucleic acids. This chain is dTTP/UTP pyrophosphatase, found in Chlorobium phaeovibrioides (strain DSM 265 / 1930) (Prosthecochloris vibrioformis (strain DSM 265)).